The chain runs to 457 residues: Sensor protein CpxA (457 aa).

Residues 1-7 (MIGSLTA) are Cytoplasmic-facing. Residues 8–29 (RIFAIFWLTLALVLMLVLMLPK) traverse the membrane as a helical segment. Topologically, residues 30–163 (LDSRQMTELL…SDFINLLFDR (134 aa)) are periplasmic. Residues 164 to 184 (PLLLLIVTMLVSTPLLLWLAW) form a helical membrane-spanning segment. One can recognise an HAMP domain in the interval 185–237 (SLAKPARKLKNAADEVAQGNLRQHPELEAGPQEFLAAGASFNQMVTALERMMT). Topologically, residues 185-457 (SLAKPARKLK…VIWLPLYKRS (273 aa)) are cytoplasmic. The Histidine kinase domain occupies 245–455 (DISHELRTPL…RLVIWLPLYK (211 aa)). Position 248 is a phosphohistidine; by autocatalysis (His-248).

It localises to the cell inner membrane. It carries out the reaction ATP + protein L-histidine = ADP + protein N-phospho-L-histidine.. Functionally, this protein is involved in several diverse cellular processes, such as the functioning of acetohydroxyacid synthetase I, in the biosynthesis of isoleucine and valine, the TraJ protein activation activity for tra gene expression in F plasmid, and the synthesis, translocation, or stability of cell envelope proteins. Activates CpxR by phosphorylation. This is Sensor protein CpxA (cpxA) from Escherichia coli O157:H7.